The following is a 472-amino-acid chain: Sodium-coupled neutral amino acid transporter 5 (472 aa).

M1 is subject to N-acetylmethionine. Residues 1-48 (MELQDPKMNGALPSDAVGYRQEREGFLPSRGPAPGSKPVQFMDFEGKT) lie on the Cytoplasmic side of the membrane. A helical membrane pass occupies residues 49-71 (SFGMSVFNLSNAIMGSGILGLAY). The Extracellular portion of the chain corresponds to 72 to 87 (AMAHTGVIFFLALLLC). Residues 88-108 (IALLSSYSIHLLLTCAGIAGI) traverse the membrane as a helical segment. At 109-125 (RAYEQLGQRAFGPAGKV) the chain is on the cytoplasmic side. The helical transmembrane segment at 126-146 (VVATVICLHNVGAMSSYLFII) threads the bilayer. Residues 147-166 (KSELPLVIGTFLYMDPEGDW) are Extracellular-facing. A helical membrane pass occupies residues 167–187 (FLKGNLLIIIVSVLIILPLAL). The Cytoplasmic portion of the chain corresponds to 188-192 (MKHLG). The chain crosses the membrane as a helical span at residues 193–213 (YLGYTSGLSLTCMLFFLVSVI). Over 214–257 (YKKFQLGCAIGHNETAMESEALVGLPSQGLNSSCEAQMFTVDSQ) the chain is Extracellular. C221 and C247 form a disulfide bridge. An N-linked (GlcNAc...) asparagine glycan is attached at N226. Residues 258–278 (MSYTVPIMAFAFVCHPEVLPI) form a helical membrane-spanning segment. The Cytoplasmic segment spans residues 279–295 (YTELCRPSKRRMQAVAN). A helical transmembrane segment spans residues 296–316 (VSIGAMFCMYGLTATFGYLTF). Topologically, residues 317-334 (YSSVKAEMLHMYSQKDPL) are extracellular. A helical transmembrane segment spans residues 335 to 355 (ILCVRLAVLLAVTLTVPVVLF). Topologically, residues 356-376 (PIRRALQQLLFPGKAFSWPRH) are cytoplasmic. Residues 377 to 397 (VAIALILLVLVNVLVICVPTI) form a helical membrane-spanning segment. The Extracellular segment spans residues 398–399 (RD). A helical transmembrane segment spans residues 400 to 420 (IFGVIGSTSAPSLIFILPSIF). At 421 to 439 (YLRIVPSEVEPFLSWPKIQ) the chain is on the cytoplasmic side. A helical transmembrane segment spans residues 440–460 (ALCFGVLGVLFMAVSLGFMFA). Residues 461–472 (NWATGQSRMSGH) lie on the Extracellular side of the membrane.

This sequence belongs to the amino acid/polyamine transporter 2 family. In terms of tissue distribution, predominantly expressed in stomach, brain, liver, lung and intestinal tract.

It localises to the cell membrane. It carries out the reaction L-serine(out) + Na(+)(out) + H(+)(in) = L-serine(in) + Na(+)(in) + H(+)(out). The catalysed reaction is L-alanine(out) + Na(+)(out) + H(+)(in) = L-alanine(in) + Na(+)(in) + H(+)(out). It catalyses the reaction glycine(out) + Na(+)(out) + H(+)(in) = glycine(in) + Na(+)(in) + H(+)(out). The enzyme catalyses L-glutamine(out) + Na(+)(out) + H(+)(in) = L-glutamine(in) + Na(+)(in) + H(+)(out). It carries out the reaction L-asparagine(out) + Na(+)(out) + H(+)(in) = L-asparagine(in) + Na(+)(in) + H(+)(out). The catalysed reaction is L-histidine(out) + Na(+)(out) + H(+)(in) = L-histidine(in) + Na(+)(in) + H(+)(out). It catalyses the reaction L-cysteine(out) + Na(+)(out) + H(+)(in) = L-cysteine(in) + Na(+)(in) + H(+)(out). Its activity is regulated as follows. Not inhibited by lithium. Partial allosteric regulation on ions sodium binding. Functionally, symporter that cotransports neutral amino acids and sodium ions, coupled to an H(+) antiporter activity. Releases L-glutamine and glycine from astroglial cells and may participate in the glutamate/GABA-L-glutamine cycle and the NMDA receptors activation. In addition, contributes significantly to L-glutamine uptake in retina, namely in ganglion and Mueller cells therefore, participates in the retinal glutamate-glutamine cycle. The transport activity is pH sensitive and Li(+) tolerant. Moreover functions in both direction and is associated with large uncoupled fluxes of protons. The transport is electroneutral coupled to the cotransport of 1 Na(+) and the antiport of 1 H(+). May have a particular importance for modulation of net hepatic glutamine flux. This chain is Sodium-coupled neutral amino acid transporter 5 (SLC38A5), found in Homo sapiens (Human).